The sequence spans 238 residues: Glycerol-3-phosphate acyltransferase (238 aa).

A run of 6 helical transmembrane segments spans residues 5–25 (VIFG…SINF), 61–81 (FLVF…SAIL), 88–108 (FGAV…VFPI), 125–145 (IASL…AMIF), 149–169 (IVSL…IIPW), and 194–214 (AWYL…FTHI).

Belongs to the PlsY family. In terms of assembly, probably interacts with PlsX.

The protein resides in the cell membrane. It carries out the reaction an acyl phosphate + sn-glycerol 3-phosphate = a 1-acyl-sn-glycero-3-phosphate + phosphate. It participates in lipid metabolism; phospholipid metabolism. Its function is as follows. Catalyzes the transfer of an acyl group from acyl-phosphate (acyl-PO(4)) to glycerol-3-phosphate (G3P) to form lysophosphatidic acid (LPA). This enzyme utilizes acyl-phosphate as fatty acyl donor, but not acyl-CoA or acyl-ACP. This is Glycerol-3-phosphate acyltransferase from Mycoplasma mobile (strain ATCC 43663 / 163K / NCTC 11711) (Mesomycoplasma mobile).